Here is a 292-residue protein sequence, read N- to C-terminus: 11-beta-hydroxysteroid dehydrogenase 1 (292 aa).

Topologically, residues 1-7 are cytoplasmic; that stretch reads MAFMKKY. Residues 8–24 form a helical; Signal-anchor for type II membrane protein membrane-spanning segment; that stretch reads LLPILGIFLAYYYYSAN. Residues 25-292 are Lumenal-facing; it reads EEFRPEMLRG…KYNMERFINN (268 aa). NADP(+)-binding positions include 41–67 and 92–93; these read GASK…TARS and TM. N95 is a glycosylation site (N-linked (GlcNAc...) asparagine). NADP(+) is bound at residue 119–121; the sequence is NHI. S170 is a binding site for substrate. Y183 functions as the Proton acceptor in the catalytic mechanism. Residue 183–187 coordinates NADP(+); that stretch reads YSASK. A glycan (N-linked (GlcNAc...) asparagine) is linked at N207. NADP(+) contacts are provided by residues 216–222 and 218–222; these read GLIDTDT and IDTDT.

The protein belongs to the short-chain dehydrogenases/reductases (SDR) family. In terms of assembly, homodimer. In terms of tissue distribution, liver, kidney, lung, hypothalamus, anterior pituitary and placenta.

It is found in the endoplasmic reticulum membrane. The catalysed reaction is an 11beta-hydroxysteroid + NADP(+) = an 11-oxosteroid + NADPH + H(+). It carries out the reaction corticosterone + NADP(+) = 11-dehydrocorticosterone + NADPH + H(+). The enzyme catalyses cortisone + NADPH + H(+) = cortisol + NADP(+). It catalyses the reaction a 7beta-hydroxysteroid + NADP(+) = a 7-oxosteroid + NADPH + H(+). The catalysed reaction is 7-oxocholesterol + NADPH + H(+) = 7beta-hydroxycholesterol + NADP(+). It carries out the reaction chenodeoxycholate + NADP(+) = 7-oxolithocholate + NADPH + H(+). The enzyme catalyses 7-oxolithocholate + NADPH + H(+) = ursodeoxycholate + NADP(+). It catalyses the reaction glycochenodeoxycholate + NADP(+) = 7-oxoglycolithocholate + NADPH + H(+). The catalysed reaction is taurochenodeoxycholate + NADP(+) = 7-oxotaurolithocholate + NADPH + H(+). It carries out the reaction tauroursodeoxycholate + NADP(+) = 7-oxotaurolithocholate + NADPH + H(+). The enzyme catalyses glycoursodeoxycholate + NADP(+) = 7-oxoglycolithocholate + NADPH + H(+). It catalyses the reaction 7-oxopregnenolone + NADPH + H(+) = 7beta-hydroxypregnenolone + NADP(+). The catalysed reaction is 3beta,7alpha-dihydroxyandrost-5-en-17-one + NADP(+) = 3beta-hydroxy-5-androstene-7,17-dione + NADPH + H(+). It carries out the reaction 3beta-hydroxy-5-androstene-7,17-dione + NADPH + H(+) = 3beta,7beta-dihydroxyandrost-5-en-17-one + NADP(+). The enzyme catalyses 3beta-hydroxy-5alpha-androstane-7,17-dione + NADPH + H(+) = 3beta,7beta-dihydroxy-5alpha-androstan-17-one + NADP(+). Its function is as follows. Controls the reversible conversion of biologically active glucocorticoids such as cortisone to cortisol, and 11-dehydrocorticosterone to corticosterone in the presence of NADP(H). Participates in the corticosteroid receptor-mediated anti-inflammatory response, as well as metabolic and homeostatic processes. Plays a role in the secretion of aqueous humor in the eye, maintaining a normotensive, intraocular environment. Bidirectional in vitro, predominantly functions as a reductase in vivo, thereby increasing the concentration of active glucocorticoids. It has broad substrate specificity, besides glucocorticoids, it accepts other steroid and sterol substrates. Interconverts 7-oxo- and 7-hydroxy-neurosteroids such as 7-oxopregnenolone and 7beta-hydroxypregnenolone, 7-oxodehydroepiandrosterone (3beta-hydroxy-5-androstene-7,17-dione) and 7beta-hydroxydehydroepiandrosterone (3beta,7beta-dihydroxyandrost-5-en-17-one), among others. Catalyzes the stereo-specific conversion of the major dietary oxysterol, 7-ketocholesterol (7-oxocholesterol), into the more polar 7-beta-hydroxycholesterol metabolite. 7-oxocholesterol is one of the most important oxysterols, it participates in several events such as induction of apoptosis, accumulation in atherosclerotic lesions, lipid peroxidation, and induction of foam cell formation. Mediates the 7-oxo reduction of 7-oxolithocholate mainly to chenodeoxycholate, and to a lesser extent to ursodeoxycholate, both in its free form and when conjugated to glycine or taurine, providing a link between glucocorticoid activation and bile acid metabolism. Catalyzes the synthesis of 7-beta-25-dihydroxycholesterol from 7-oxo-25-hydroxycholesterol in vitro, which acts as a ligand for the G-protein-coupled receptor (GPCR) Epstein-Barr virus-induced gene 2 (EBI2) and may thereby regulate immune cell migration. This Ovis aries (Sheep) protein is 11-beta-hydroxysteroid dehydrogenase 1 (HSD11B1).